The primary structure comprises 81 residues: RNA-binding protein Hfq (81 aa).

One can recognise a Sm domain in the interval 10–69; the sequence is DPFLNTLRREHVPVSIYLVNGIKLQGQIESFDQYVVLLRNTVTQMVYKHAISTIVPGRAV.

It belongs to the Hfq family. Homohexamer.

RNA chaperone that binds small regulatory RNA (sRNAs) and mRNAs to facilitate mRNA translational regulation in response to envelope stress, environmental stress and changes in metabolite concentrations. Also binds with high specificity to tRNAs. This is RNA-binding protein Hfq from Variovorax paradoxus (strain S110).